The chain runs to 1387 residues: DNA-directed RNA polymerase subunit beta'' (1387 aa).

Residues C224, C295, C302, and C305 each coordinate Zn(2+).

It belongs to the RNA polymerase beta' chain family. RpoC2 subfamily. In terms of assembly, in plastids the minimal PEP RNA polymerase catalytic core is composed of four subunits: alpha, beta, beta', and beta''. When a (nuclear-encoded) sigma factor is associated with the core the holoenzyme is formed, which can initiate transcription. It depends on Zn(2+) as a cofactor.

Its subcellular location is the plastid. The protein resides in the chloroplast. It catalyses the reaction RNA(n) + a ribonucleoside 5'-triphosphate = RNA(n+1) + diphosphate. In terms of biological role, DNA-dependent RNA polymerase catalyzes the transcription of DNA into RNA using the four ribonucleoside triphosphates as substrates. This chain is DNA-directed RNA polymerase subunit beta'', found in Panax ginseng (Korean ginseng).